Reading from the N-terminus, the 279-residue chain is MRTTIRDIQQMRDRGERIPMVTAYDYTSAQIADRAGIPMILVGDSLGMVVLGHDSTVPVTLDEMIHHTRAVVRGARNALIIGDLPFLTYASPEQAVISAGRMLQEAGAQAVKLEGGVHIAPTIARLVHLGIPVMGHIGFTPQAVNQIGLRVQGRRANEARQLLEDALAVQEAGAFAIVLELVPAELAQAITERLRIPTIGIGAGAGCSGQVQVWHDLLGLYSDFVPRHARRYTDLATVIGEALTQYVHDVRTGTFPGPEHSSRMDPTELAAALGNLEES.

Mg(2+)-binding residues include aspartate 44 and aspartate 83. Residues aspartate 44–serine 45, aspartate 83, and lysine 112 each bind 3-methyl-2-oxobutanoate. Glutamate 114 contacts Mg(2+). The active-site Proton acceptor is the glutamate 180.

This sequence belongs to the PanB family. Homodecamer; pentamer of dimers. Requires Mg(2+) as cofactor.

The protein resides in the cytoplasm. The enzyme catalyses 3-methyl-2-oxobutanoate + (6R)-5,10-methylene-5,6,7,8-tetrahydrofolate + H2O = 2-dehydropantoate + (6S)-5,6,7,8-tetrahydrofolate. It participates in cofactor biosynthesis; (R)-pantothenate biosynthesis; (R)-pantoate from 3-methyl-2-oxobutanoate: step 1/2. Its function is as follows. Catalyzes the reversible reaction in which hydroxymethyl group from 5,10-methylenetetrahydrofolate is transferred onto alpha-ketoisovalerate to form ketopantoate. This chain is 3-methyl-2-oxobutanoate hydroxymethyltransferase, found in Chloroflexus aggregans (strain MD-66 / DSM 9485).